We begin with the raw amino-acid sequence, 393 residues long: MCSARVTPDVVLLFDPQYWNYLHVARAVAPHALLITDISVFPAVFRLPWEYIVLAGSACPFATSLAHHDASCSPSHALPLPFVAPDLLASGGSVATSAWECARYLGATTIVYIGLDLAFPGARTHFRGALFEERAHLQSGRVAPAETTSFCALHSLPLYPVPAASDPHPGKNSPASPTGENKEQTVLTDARFSLYAVWLEAHLARYTHIKTYALEPAGRRVAGITPLRFSQLVTLLNRSAAVPHCRTMYSRRRRLYSRYRNSSVQVNCTDAVRWRRTMKSTPVHCLGHFTKKKKSAEGARNLWRALRRADTRCASPHNLEHALERTRSFLNAMPLTPTTYENKTHALYTALCTLLPTEPTYRARAHAHLFELLTRTLKFCAAYTEEEGEWREA.

The disordered stretch occupies residues 164–183 (ASDPHPGKNSPASPTGENKE). A compositionally biased stretch (polar residues) spans 173 to 183 (SPASPTGENKE).

This is an uncharacterized protein from Treponema pallidum (strain Nichols).